A 510-amino-acid chain; its full sequence is MTSTVTQQASGPSPDRSARTFEVRTYGCQMNVHDSERLAGLLEGAGYRRAGEGADADIVVFNTCAVRENADNKLYGNLSHLAPRKQSDPDMQIAVGGCLAQKDRDSVLRKAPWVDVVFGTHNIGSLPALLDRARHNRVAQVEIAEALQEFPSALPASRESSYAAWVSISVGCNNTCTFCIVPALRGREVDRRPGDVLAEVQSLVDQGVLEITLLGQNVNAYGVSFADPTEPRDRGAFAKLLRACGRIDGLERVRFTSPHPAEFTDDVIEAMAETPNVCPTLHMPLQSGSDRILRAMRRSYRAERYLGIIDRVRAAIPHAAITTDLIVGFPGETEEDFQATLDVVAASRFSSAFTFQYSKRPGTPAAELADQVPKAVVSERYQRLIELQERISLEENTAQIGRRVELLVATGEGRKDAATARMSGRARDGRLVHFAPGAVGSEVRPGDVVVTTVTGAAPHHLIADAGLIEHRRTRAGDAHAAGQKPRTGVGLGMPAVGAPDPLPATTGCAR.

The region spanning 19–135 (RTFEVRTYGC…LPALLDRARH (117 aa)) is the MTTase N-terminal domain. Residues Cys28, Cys64, Cys98, Cys172, Cys176, and Cys179 each coordinate [4Fe-4S] cluster. One can recognise a Radical SAM core domain in the interval 158–394 (RESSYAAWVS…IELQERISLE (237 aa)). The 71-residue stretch at 397–467 (TAQIGRRVEL…PHHLIADAGL (71 aa)) folds into the TRAM domain. Residues 477–510 (DAHAAGQKPRTGVGLGMPAVGAPDPLPATTGCAR) form a disordered region.

The protein belongs to the methylthiotransferase family. MiaB subfamily. Monomer. [4Fe-4S] cluster is required as a cofactor.

The protein resides in the cytoplasm. The catalysed reaction is N(6)-dimethylallyladenosine(37) in tRNA + (sulfur carrier)-SH + AH2 + 2 S-adenosyl-L-methionine = 2-methylsulfanyl-N(6)-dimethylallyladenosine(37) in tRNA + (sulfur carrier)-H + 5'-deoxyadenosine + L-methionine + A + S-adenosyl-L-homocysteine + 2 H(+). Functionally, catalyzes the methylthiolation of N6-(dimethylallyl)adenosine (i(6)A), leading to the formation of 2-methylthio-N6-(dimethylallyl)adenosine (ms(2)i(6)A) at position 37 in tRNAs that read codons beginning with uridine. This Mycolicibacterium vanbaalenii (strain DSM 7251 / JCM 13017 / BCRC 16820 / KCTC 9966 / NRRL B-24157 / PYR-1) (Mycobacterium vanbaalenii) protein is tRNA-2-methylthio-N(6)-dimethylallyladenosine synthase.